Here is a 323-residue protein sequence, read N- to C-terminus: Methionyl-tRNA formyltransferase (323 aa).

115-118 (SLLP) contacts (6S)-5,6,7,8-tetrahydrofolate.

The protein belongs to the Fmt family.

The enzyme catalyses L-methionyl-tRNA(fMet) + (6R)-10-formyltetrahydrofolate = N-formyl-L-methionyl-tRNA(fMet) + (6S)-5,6,7,8-tetrahydrofolate + H(+). Its function is as follows. Attaches a formyl group to the free amino group of methionyl-tRNA(fMet). The formyl group appears to play a dual role in the initiator identity of N-formylmethionyl-tRNA by promoting its recognition by IF2 and preventing the misappropriation of this tRNA by the elongation apparatus. The chain is Methionyl-tRNA formyltransferase from Lactococcus lactis subsp. cremoris (strain MG1363).